The primary structure comprises 260 residues: Proliferating cell nuclear antigen (260 aa).

A DNA-binding region spans residues Arg-61–Lys-80.

It belongs to the PCNA family. As to quaternary structure, homotrimer. Forms a complex with activator 1 heteropentamer in the presence of ATP. Interacts with E2f. Interacts with the catalytic subunits of two DNA polymerase complexes: PolD1 from the delta complex and PolE1/DNApol-epsilon255 from the epsilon complex. In terms of tissue distribution, expressed at high levels in adult ovary.

The protein resides in the nucleus. Its subcellular location is the chromosome. It localises to the cytoplasm. Its function is as follows. Likely to be an auxiliary protein of DNA polymerase delta complex and is probably involved in the control of DNA replication and repair by increasing the polymerase's processibility. In Drosophila melanogaster (Fruit fly), this protein is Proliferating cell nuclear antigen.